The primary structure comprises 71 residues: uncharacterized protein (71 aa).

2 helical membrane passes run 9-29 (FVIFSLFFTFISVSTFGNINF) and 41-61 (FVALFYIFTHTSFTSLCFFGL).

The protein resides in the membrane. This is an uncharacterized protein from Acheta domesticus (House cricket).